A 257-amino-acid polypeptide reads, in one-letter code: Ciliary microtubule associated protein 1B (257 aa).

3 STPGR repeats span residues 103-129 (PGPG…LSAR), 182-207 (PGPG…MTGR), and 218-243 (PGPG…FGIR).

Belongs to the CIMAP family.

Its subcellular location is the cell projection. It is found in the cilium. The protein localises to the flagellum. In Danio rerio (Zebrafish), this protein is Ciliary microtubule associated protein 1B (cimap1b).